The primary structure comprises 151 residues: 3-hydroxyacyl-[acyl-carrier-protein] dehydratase FabZ (151 aa).

Residue His53 is part of the active site.

The protein belongs to the thioester dehydratase family. FabZ subfamily.

The protein localises to the cytoplasm. It carries out the reaction a (3R)-hydroxyacyl-[ACP] = a (2E)-enoyl-[ACP] + H2O. Involved in unsaturated fatty acids biosynthesis. Catalyzes the dehydration of short chain beta-hydroxyacyl-ACPs and long chain saturated and unsaturated beta-hydroxyacyl-ACPs. The sequence is that of 3-hydroxyacyl-[acyl-carrier-protein] dehydratase FabZ from Erythrobacter litoralis (strain HTCC2594).